Reading from the N-terminus, the 316-residue chain is Ribosomal RNA small subunit methyltransferase H (316 aa).

Residues 35–37 (SGH), Asp55, Phe84, Asp105, and Gln112 each bind S-adenosyl-L-methionine.

This sequence belongs to the methyltransferase superfamily. RsmH family.

It is found in the cytoplasm. The catalysed reaction is cytidine(1402) in 16S rRNA + S-adenosyl-L-methionine = N(4)-methylcytidine(1402) in 16S rRNA + S-adenosyl-L-homocysteine + H(+). In terms of biological role, specifically methylates the N4 position of cytidine in position 1402 (C1402) of 16S rRNA. This chain is Ribosomal RNA small subunit methyltransferase H, found in Streptococcus equi subsp. zooepidemicus (strain MGCS10565).